A 238-amino-acid polypeptide reads, in one-letter code: Cysteine-rich venom protein pseudechetoxin (238 aa).

An N-terminal signal peptide occupies residues 1–19 (MIAFIVLLSLAAVLQQSSG). Residues 20-27 (TADFASES) constitute a propeptide that is removed on maturation. An SCP domain is found at 38–164 (VDKHNALRRS…SSKYLYVCQY (127 aa)). The Zn(2+) site is built by Thr51 and Ser106. 8 cysteine pairs are disulfide-bonded: Cys75/Cys153, Cys92/Cys165, Cys148/Cys162, Cys184/Cys191, Cys187/Cys196, Cys200/Cys233, Cys209/Cys227, and Cys218/Cys231. Residues 200–233 (CKRNNDFSNCKSLAKKSKCQTEWIKKKCPASCFC) form the ShKT domain.

Expressed by the venom gland.

Its subcellular location is the secreted. In terms of biological role, blocks olfactory (CNGA2) and retinal (CNGA1) cyclic nucleotide-gated (CNG) ion channel currents. Does not inhibit retinal (CNGA3) currents. It forms high-affinity contacts with the pore turret region and most likely inhibits CNG channel current by blocking the external entrance to the transmembrane pore. Is really more potent that Pseudecin. Does not affect neither depolarization- nor caffeine-induced contraction arterial smooth muscle. This Pseudechis australis (Mulga snake) protein is Cysteine-rich venom protein pseudechetoxin.